We begin with the raw amino-acid sequence, 222 residues long: UPF0502 protein Lcho_2066 (222 aa).

This sequence belongs to the UPF0502 family.

The protein is UPF0502 protein Lcho_2066 of Leptothrix cholodnii (strain ATCC 51168 / LMG 8142 / SP-6) (Leptothrix discophora (strain SP-6)).